The primary structure comprises 469 residues: Tubulin gamma-1 chain (469 aa).

142 to 148 (AGGTGSG) serves as a coordination point for GTP.

This sequence belongs to the tubulin family.

It localises to the cytoplasm. It is found in the cytoskeleton. The protein localises to the microtubule organizing center. Its function is as follows. Tubulin is the major constituent of microtubules. The gamma chain is found at microtubule organizing centers (MTOC) such as the spindle poles, suggesting that it is involved in the minus-end nucleation of microtubule assembly. The polypeptide is Tubulin gamma-1 chain (TUBG1) (Zea mays (Maize)).